We begin with the raw amino-acid sequence, 332 residues long: MNSTLQHGMHTSLHFWNRSTYGQHSNATESLGKGYPDGGCYEQLFVSPEVFVTLGVISLLENILVIVAIAKNKNLHSPMYFFICSLAVADMLVSVSNGSETIVITLLNSTDTDAQSFTVNIDNVIDSVICSSLLASICSLLSIAVDRYFTIFYALQYHNIMTVRRVGIIISCIWAACTVSGILFIIYSDSTAVIICLITMFFTMLALMASLYVHMFLMARLHIKRIAVLPGTGTIRQGANMKGAITLTILIGVFVVCWAPFFLHLIFYISCPQNPYCVCFMSHFNLYLILIMCNSIIDPLIYALRSQELRKTFKEIICCYPLGGLCDLSSRY.

At 1-43 (MNSTLQHGMHTSLHFWNRSTYGQHSNATESLGKGYPDGGCYEQ) the chain is on the extracellular side. 3 N-linked (GlcNAc...) asparagine glycosylation sites follow: Asn-2, Asn-17, and Asn-26. 2 cysteine pairs are disulfide-bonded: Cys-40/Cys-279 and Cys-271/Cys-277. Residues 44–69 (LFVSPEVFVTLGVISLLENILVIVAI) traverse the membrane as a helical segment. Over 70-81 (AKNKNLHSPMYF) the chain is Cytoplasmic. A helical transmembrane segment spans residues 82–106 (FICSLAVADMLVSVSNGSETIVITL). The Ca(2+) site is built by Glu-100, Asp-122, and Asp-126. At 107–123 (LNSTDTDAQSFTVNIDN) the chain is on the extracellular side. Residues 124–145 (VIDSVICSSLLASICSLLSIAV) traverse the membrane as a helical segment. At 146-165 (DRYFTIFYALQYHNIMTVRR) the chain is on the cytoplasmic side. A helical transmembrane segment spans residues 166–186 (VGIIISCIWAACTVSGILFII). Over 187–191 (YSDST) the chain is Extracellular. Residues 192-215 (AVIICLITMFFTMLALMASLYVHM) traverse the membrane as a helical segment. Residues 216 to 248 (FLMARLHIKRIAVLPGTGTIRQGANMKGAITLT) are Cytoplasmic-facing. A helical membrane pass occupies residues 249-271 (ILIGVFVVCWAPFFLHLIFYISC). Over 272 to 280 (PQNPYCVCF) the chain is Extracellular. The helical transmembrane segment at 281–304 (MSHFNLYLILIMCNSIIDPLIYAL) threads the bilayer. The Cytoplasmic portion of the chain corresponds to 305 to 332 (RSQELRKTFKEIICCYPLGGLCDLSSRY). A lipid anchor (S-palmitoyl cysteine) is attached at Cys-318.

The protein belongs to the G-protein coupled receptor 1 family. As to quaternary structure, homodimer; disulfide-linked, also forms higher order oligomers. Interacts with GNAS. Interacts with ATRNL1. Interacts with MGRN1; this interaction competes with GNAS-binding and thus inhibits agonist-induced cAMP production. Interacts with MRAP and MRAP2; these associated factors increase ligand-sensitivity and generation of cAMP.

The protein resides in the cell membrane. Hormone receptor that acts as a key component of the leptin-melanocortin pathway at the intersection of homeostatic maintenance of energetic state. Plays a role in regulating food intake: activation by a stimulating hormone such as anorexigenic alpha-melanocyte stimulating hormone (alpha-MSH) inhibits appetite, whereas binding to a natural antagonist like Agouti-related protein/AGRP promotes appetite. G-protein-coupled receptor that activates conventional Galphas signaling leading to induction of anorexogenic signaling in the hypothalamus to result in negative energy balance. Regulates the firing activity of neurons from the hypothalamus by alpha-MSH and AGRP independently of Galphas signaling by ligand-induced coupling of closure of inwardly rectifying potassium channel KCNJ13. In intestinal epithelial cells, plays a role in the inhibition of hepatic glucose production via nesfatin-1/NUCB2 leading to increased cyclic adenosine monophosphate (cAMP) levels and glucagon-like peptide 1 (GLP-1) secretion in the intestinal epithelium. The chain is Melanocortin receptor 4 (MC4R) from Vulpes vulpes (Red fox).